The primary structure comprises 458 residues: MLQIDVVILAAGMGKRMRSTLPKVLHPLAGKPILFHVLDTARILSPTKICVIYGHGGELVRQTVGNDPNLIWVKQTQQLGTGHAVKQALPCLGKNGITLVLFGDVPLVKSNTLKSLIDKACEDSLALLTVELNDPAGYGRIIRDPKTNRVQAIVEEQDALPSQKKIREINTGIMVLPNMYLESWLDRLSNANTQGEYYLTDIIAMAVNDGVQIETSSPASDWEVVGVNDKIQLSTLERAHQQDVAKGLMEQGVMFADPARFDVRGQLICGHNVEIDINCVFEGNVRLGDNVKISANCILRNVAISDGSIVHPFSMIEDTEVGKNCRVGPYARIRPGTQLDDAVHVGNFVEIKNSHIASGSKVNHLSYIGDTEMGRRVNIGAGTITCNYDGAFKHQTIIEDDVFIGSDSQLIAPITVAKGSTIGAGSTITRDTPEGQLTLSRIKQISIANWKRPKKNKD.

Positions 1–230 (MLQIDVVILA…DWEVVGVNDK (230 aa)) are pyrophosphorylase. Residues 9 to 12 (LAAG), Lys23, Gln75, and 80 to 81 (GT) each bind UDP-N-acetyl-alpha-D-glucosamine. Asp104 serves as a coordination point for Mg(2+). Residues Gly139, Glu155, Asn170, and Asn228 each contribute to the UDP-N-acetyl-alpha-D-glucosamine site. Asn228 is a binding site for Mg(2+). The tract at residues 231–251 (IQLSTLERAHQQDVAKGLMEQ) is linker. Residues 252–458 (GVMFADPARF…NWKRPKKNKD (207 aa)) are N-acetyltransferase. The UDP-N-acetyl-alpha-D-glucosamine site is built by Arg334 and Lys352. The active-site Proton acceptor is His364. 2 residues coordinate UDP-N-acetyl-alpha-D-glucosamine: Tyr367 and Asn378. Acetyl-CoA contacts are provided by residues Ala381, 387–388 (NY), Ser406, Ala424, and Arg441.

This sequence in the N-terminal section; belongs to the N-acetylglucosamine-1-phosphate uridyltransferase family. The protein in the C-terminal section; belongs to the transferase hexapeptide repeat family. Homotrimer. Mg(2+) is required as a cofactor.

The protein resides in the cytoplasm. It catalyses the reaction alpha-D-glucosamine 1-phosphate + acetyl-CoA = N-acetyl-alpha-D-glucosamine 1-phosphate + CoA + H(+). The catalysed reaction is N-acetyl-alpha-D-glucosamine 1-phosphate + UTP + H(+) = UDP-N-acetyl-alpha-D-glucosamine + diphosphate. It participates in nucleotide-sugar biosynthesis; UDP-N-acetyl-alpha-D-glucosamine biosynthesis; N-acetyl-alpha-D-glucosamine 1-phosphate from alpha-D-glucosamine 6-phosphate (route II): step 2/2. The protein operates within nucleotide-sugar biosynthesis; UDP-N-acetyl-alpha-D-glucosamine biosynthesis; UDP-N-acetyl-alpha-D-glucosamine from N-acetyl-alpha-D-glucosamine 1-phosphate: step 1/1. Its pathway is bacterial outer membrane biogenesis; LPS lipid A biosynthesis. In terms of biological role, catalyzes the last two sequential reactions in the de novo biosynthetic pathway for UDP-N-acetylglucosamine (UDP-GlcNAc). The C-terminal domain catalyzes the transfer of acetyl group from acetyl coenzyme A to glucosamine-1-phosphate (GlcN-1-P) to produce N-acetylglucosamine-1-phosphate (GlcNAc-1-P), which is converted into UDP-GlcNAc by the transfer of uridine 5-monophosphate (from uridine 5-triphosphate), a reaction catalyzed by the N-terminal domain. This chain is Bifunctional protein GlmU, found in Nitrosomonas eutropha (strain DSM 101675 / C91 / Nm57).